Reading from the N-terminus, the 139-residue chain is Large ribosomal subunit protein uL24 (139 aa).

Positions 1-25 (MKRNTNVSSSRRKSRKAHFTASSGE) are disordered.

Belongs to the universal ribosomal protein uL24 family.

This chain is Large ribosomal subunit protein uL24 (rpl26), found in Dictyostelium discoideum (Social amoeba).